The primary structure comprises 86 residues: Large ribosomal subunit protein bL31B (86 aa).

Belongs to the bacterial ribosomal protein bL31 family. Type B subfamily. As to quaternary structure, part of the 50S ribosomal subunit.

This Chloroherpeton thalassium (strain ATCC 35110 / GB-78) protein is Large ribosomal subunit protein bL31B.